We begin with the raw amino-acid sequence, 678 residues long: DNA ligase (678 aa).

Residues 36–40 (DVVYD), 85–86 (SL), and Glu117 contribute to the NAD(+) site. Residue Lys119 is the N6-AMP-lysine intermediate of the active site. The NAD(+) site is built by Arg140, Glu177, Lys294, and Lys318. The Zn(2+) site is built by Cys412, Cys415, Cys430, and Cys435. Residues 598-678 (ISSTPLAGKT…QLLKMINPQE (81 aa)) form the BRCT domain.

This sequence belongs to the NAD-dependent DNA ligase family. LigA subfamily. Mg(2+) serves as cofactor. The cofactor is Mn(2+).

It carries out the reaction NAD(+) + (deoxyribonucleotide)n-3'-hydroxyl + 5'-phospho-(deoxyribonucleotide)m = (deoxyribonucleotide)n+m + AMP + beta-nicotinamide D-nucleotide.. Its function is as follows. DNA ligase that catalyzes the formation of phosphodiester linkages between 5'-phosphoryl and 3'-hydroxyl groups in double-stranded DNA using NAD as a coenzyme and as the energy source for the reaction. It is essential for DNA replication and repair of damaged DNA. This Gloeothece citriformis (strain PCC 7424) (Cyanothece sp. (strain PCC 7424)) protein is DNA ligase.